The sequence spans 481 residues: UDP-glycosyltransferase 72E2 (481 aa).

H18 functions as the Proton acceptor in the catalytic mechanism. H18 lines the an anthocyanidin pocket. Residue D111 is the Charge relay of the active site. The UDP-alpha-D-glucose site is built by A346, Q348, H363, W366, S368, and E371. A386 lines the an anthocyanidin pocket. The UDP-alpha-D-glucose site is built by E387 and Q388.

Belongs to the UDP-glycosyltransferase family. In terms of tissue distribution, expressed in seedlings and roots.

It carries out the reaction (E)-4-coumarate + UDP-alpha-D-glucose = 4-O-(beta-D-glucosyl)-trans-4-coumarate + UDP + H(+). The catalysed reaction is (E)-coniferol + UDP-alpha-D-glucose = 4-O-(beta-D-glucosyl)-(E)-coniferol + UDP + H(+). It catalyses the reaction (E)-sinapyl alcohol + UDP-alpha-D-glucose = 4-O-(beta-D-glucosyl)-trans-4-sinapoyl alcohol + UDP + H(+). The enzyme catalyses (E)-sinapate + UDP-alpha-D-glucose = 4-O-(beta-D-glucosyl)-trans-sinapate + UDP + H(+). It carries out the reaction (E)-coniferaldehyde + UDP-alpha-D-glucose = 4-O-(beta-D-glucosyl)-4-(E)-coniferyl aldehyde + UDP + H(+). The catalysed reaction is (E)-sinapaldehyde + UDP-alpha-D-glucose = 4-O-(beta-D-glucosyl)-4-trans-sinapoyl aldehyde + UDP + H(+). In terms of biological role, involved in the O-glucosylation of monolignols (alcohol monomers of lignin). Glucosylates coniferyl alcohol to form coniferyl alcohol 4-O-glucoside. Glucosylates sinapyl alcohol to form sinapyl alcohol 4-O-glucoside. Glucosylates coniferyl aldehyde to form coniferyl aldehyde 4-O-glucoside. Glucosylates sinapyl aldehyde to form sinapyl aldehyde 4-O-glucoside. Possesses low activity with sinapate and ferulate as substrates. This Arabidopsis thaliana (Mouse-ear cress) protein is UDP-glycosyltransferase 72E2.